A 681-amino-acid polypeptide reads, in one-letter code: Methionine--tRNA ligase (681 aa).

The 'HIGH' region motif lies at 15 to 25 (PYANGPIHLGH). The Zn(2+) site is built by C146, C149, C159, and C162. The 'KMSKS' region motif lies at 332–336 (KMSKS). Residue K335 coordinates ATP. The segment at 547-569 (DNMAQAPKDNGKAKKDKKEAKSE) is disordered. The segment covering 555–569 (DNGKAKKDKKEAKSE) has biased composition (basic and acidic residues). The tRNA-binding domain maps to 580-681 (DFAKIDLRIA…SGAQPGMQVK (102 aa)).

The protein belongs to the class-I aminoacyl-tRNA synthetase family. MetG type 1 subfamily. Homodimer. It depends on Zn(2+) as a cofactor.

Its subcellular location is the cytoplasm. It catalyses the reaction tRNA(Met) + L-methionine + ATP = L-methionyl-tRNA(Met) + AMP + diphosphate. Its function is as follows. Is required not only for elongation of protein synthesis but also for the initiation of all mRNA translation through initiator tRNA(fMet) aminoacylation. The chain is Methionine--tRNA ligase from Hahella chejuensis (strain KCTC 2396).